A 375-amino-acid chain; its full sequence is MRTRAAVALEAGKPLEVMEVNLEGPKAGEVMVEIKATGICHTDEFTLSGADPEGLFPSILGHEGAGVVVEVGPGVTSVKPGNHVIPLYTPECRQCASCLSGKTNLCTAIRATQGQGLMPDGTSRFSMLDGTPIFHYMGCSTFSNYTVLPEIAVAKVREDAPFDKICYIGCGVTTGIGAVINTAKVEIGAKAVVFGLGGIGLNVLQGLRLAGADMIIGVDLNDDKKPMAEHFGMTHFINPKNCENVVQEIVNLTKTPFDQIGGADYSFDCTGNVKVMRDALECTHRGWGQSIIIGVAPAGAEISTRPFQLVTGRVWKGTAFGGARGRTDVPQIVDWYMDGKIEIDPMITHTLSLDDINKGFDLMHAGESIRSVVLY.

Position 40 (Cys40) interacts with Zn(2+). His41 contacts NAD(+). 7 residues coordinate Zn(2+): His62, Glu63, Cys92, Cys95, Cys98, Cys106, and Cys170. NAD(+) is bound by residues Gly195–Gly200, Asp219, Ile293–Val295, and Thr318–Phe320.

It belongs to the zinc-containing alcohol dehydrogenase family. Class-III subfamily. In terms of assembly, homotetramer. Zn(2+) serves as cofactor.

The enzyme catalyses a primary alcohol + NAD(+) = an aldehyde + NADH + H(+). It catalyses the reaction a secondary alcohol + NAD(+) = a ketone + NADH + H(+). The catalysed reaction is S-(hydroxymethyl)glutathione + NADP(+) = S-formylglutathione + NADPH + H(+). It carries out the reaction S-(hydroxymethyl)glutathione + NAD(+) = S-formylglutathione + NADH + H(+). The enzyme catalyses S-nitrosoglutathione + NADH + H(+) = S-(hydroxysulfenamide)glutathione + NAD(+). Functionally, oxidizes long-chain alcohols and, in the presence of glutathione, is able to oxidize formaldehyde. Also acts as a S-nitroso-glutathione reductase by catalyzing the NADH-dependent reduction of S-nitrosoglutathione, thereby regulating protein S-nitrosylation. In Paracoccus denitrificans, this protein is S-(hydroxymethyl)glutathione dehydrogenase (flhA).